Reading from the N-terminus, the 336-residue chain is Ketol-acid reductoisomerase (NADP(+)) (336 aa).

In terms of domain architecture, KARI N-terminal Rossmann spans 3–183; that stretch reads ATMYYDRDVS…GGTRAGVLET (181 aa). Residues 26 to 29, R49, S52, S54, and 84 to 87 each bind NADP(+); these read YGSQ and DETQ. The active site involves H109. Residue G135 participates in NADP(+) binding. The KARI C-terminal knotted domain maps to 184–329; sequence TFKEETETDL…RELRSKMPFI (146 aa). 4 residues coordinate Mg(2+): D192, E196, E228, and E232. Residue S253 participates in substrate binding.

This sequence belongs to the ketol-acid reductoisomerase family. Mg(2+) is required as a cofactor.

It carries out the reaction (2R)-2,3-dihydroxy-3-methylbutanoate + NADP(+) = (2S)-2-acetolactate + NADPH + H(+). It catalyses the reaction (2R,3R)-2,3-dihydroxy-3-methylpentanoate + NADP(+) = (S)-2-ethyl-2-hydroxy-3-oxobutanoate + NADPH + H(+). The protein operates within amino-acid biosynthesis; L-isoleucine biosynthesis; L-isoleucine from 2-oxobutanoate: step 2/4. It functions in the pathway amino-acid biosynthesis; L-valine biosynthesis; L-valine from pyruvate: step 2/4. In terms of biological role, involved in the biosynthesis of branched-chain amino acids (BCAA). Catalyzes an alkyl-migration followed by a ketol-acid reduction of (S)-2-acetolactate (S2AL) to yield (R)-2,3-dihydroxy-isovalerate. In the isomerase reaction, S2AL is rearranged via a Mg-dependent methyl migration to produce 3-hydroxy-3-methyl-2-ketobutyrate (HMKB). In the reductase reaction, this 2-ketoacid undergoes a metal-dependent reduction by NADPH to yield (R)-2,3-dihydroxy-isovalerate. This Deinococcus geothermalis (strain DSM 11300 / CIP 105573 / AG-3a) protein is Ketol-acid reductoisomerase (NADP(+)).